Here is a 212-residue protein sequence, read N- to C-terminus: Probable GTP-binding protein EngB (212 aa).

Positions 40-212 constitute an EngB-type G domain; it reads SLPEIAFVGK…KASLAKCIKA (173 aa). Residues 48–55, 75–79, 93–96, 160–163, and 191–193 each bind GTP; these read GKSNVGKS, GRTRQ, DLPG, TKSD, and VSS. The Mg(2+) site is built by Ser55 and Thr77.

The protein belongs to the TRAFAC class TrmE-Era-EngA-EngB-Septin-like GTPase superfamily. EngB GTPase family. It depends on Mg(2+) as a cofactor.

Functionally, necessary for normal cell division and for the maintenance of normal septation. This is Probable GTP-binding protein EngB from Rickettsia akari (strain Hartford).